A 1014-amino-acid chain; its full sequence is Protein argonaute 2 (1014 aa).

The span at 1 to 15 (MERGGYRGGRGDGRG) shows a compositional bias: basic and acidic residues. Residues 1–137 (MERGGYRGGR…PSTSTTVVSE (137 aa)) form a disordered region. 2 stretches are compositionally biased toward gly residues: residues 18-29 (GRGYGGGGGGGE) and 49-58 (RGGGNRGQGR). Over residues 83-104 (QFQQPRPQVAPQPSQAPASYAG) the composition is skewed to low complexity. Positions 105–114 (SVGGVAGRGA) are enriched in gly residues. The segment covering 121-137 (VPSDSASPSTSTTVVSE) has biased composition (low complexity). Positions 369–482 (SVIEYLKLYF…VPMEFCDLVE (114 aa)) constitute a PAZ domain. In terms of domain architecture, Piwi spans 666 to 965 (LVLCAMSRKD…VAFRGRMYHE (300 aa)). Interaction with guide RNA stretches follow at residues 857-858 (KR), 900-908 (HHGGIGTSK), and 937-959 (FTRC…VAFR).

This sequence belongs to the argonaute family. Ago subfamily. As to quaternary structure, interacts with NERD.

Functionally, involved in RNA-mediated post-transcriptional gene silencing (PTGS). Main component of the RNA-induced silencing complex (RISC) that binds to a short guide RNA such as microRNA (miRNA) or small interfering RNA (siRNA). RISC uses the mature miRNA or siRNA as a guide for slicer-directed cleavage of homologous mRNAs to repress gene expression. Associates mainly with siRNAs of 21 nucleotide in length and preferentially recruits small RNAs with a 5' terminal adenosine. Probably involved in antiviral RNA silencing. Associates with siRNA derived from cucumber mosaic virus (CMV). Targeted by turnip yellows virus (TuYV) protein P0 (via F-box-like domain) for probable proteasome degradation and thereby inactivating AGO2 function in RNA silencing. Required to direct NERD-dependent DNA methylation and silencing. The chain is Protein argonaute 2 (AGO2) from Arabidopsis thaliana (Mouse-ear cress).